Here is a 151-residue protein sequence, read N- to C-terminus: Protein InSETG-4 (151 aa).

It is found in the cytoplasm. It localises to the cytosol. The protein is Protein InSETG-4 (InSet4-G) of Homo sapiens (Human).